Consider the following 290-residue polypeptide: Fat storage-inducing transmembrane protein 1 (290 aa).

Transmembrane regions (helical) follow at residues 1-21 (MFLNSILVVITDLAAGLLGNT), 26-46 (HFHLLLSALLLFGPLLSLWVS), 65-85 (SGWGWTCIFVGSFVFVLSFSV), 173-193 (LLLCLCCLLLAEETAVFGPYL), and 205-225 (ILFLFCVLLLSLWVFLLLCLL).

The protein belongs to the FIT family. FIT1 subfamily.

The protein localises to the endoplasmic reticulum membrane. May play an important role in the formation of lipid droplets (LDs) which are storage organelles at the center of lipid and energy homeostasis. May directly bind to diacylglycerol (DAGs) and triacylglycerol. The sequence is that of Fat storage-inducing transmembrane protein 1 (fitm1l) from Danio rerio (Zebrafish).